Here is a 525-residue protein sequence, read N- to C-terminus: MALDIHAHRILILDFGSQYTQLIARRVREIGVYCELHPFDMDEDAIREFAPKGVILAGGPESVHEANSPRCPQAVFDLGVPVFGICYGMQTMAEQLGGKVEGSELREFGYARVDVVGKSRLLDGIEDHIDADGLFGLDVWMSHGDKVTKMPSDFHILASTPSCPIAGMFNDERAYYGVQFHPEVTHTKQGGRILSRFVLDICGCEALWTPSKIAEDAIANIRAQVGTDNVLLGLSGGVDSSVVAALLHKAIGDQLTCVFVDNGLLRLHEGEQVMAMFAENMGVKVIRANAEDQFLNNLAGEADPEKKRKIIGRTFIDVFDAESCKLDNIKYLAQGTIYPDVIESAGAKSGKAHVIKSHHNVGGLPEEMNLKLVEPLRELFKDEVRRLGLELGLPYDMVYRHPFPGPGLGVRILGEVKKEYADLLRRADHIFIEELRKADWYHKVSQAFVVFQPVKSVGVVGDGRRYAWVVALRAVETIDFMTARWAHLPYELLETVSGRIINEIEGISRVTYDVSSKPPATIEWE.

Positions 9–207 constitute a Glutamine amidotransferase type-1 domain; that stretch reads RILILDFGSQ…VLDICGCEAL (199 aa). Cysteine 86 serves as the catalytic Nucleophile. Active-site residues include histidine 181 and glutamate 183. Residues 208 to 400 enclose the GMPS ATP-PPase domain; it reads WTPSKIAEDA…LGLPYDMVYR (193 aa). Residue 235–241 coordinates ATP; it reads SGGVDSS.

In terms of assembly, homodimer.

The enzyme catalyses XMP + L-glutamine + ATP + H2O = GMP + L-glutamate + AMP + diphosphate + 2 H(+). It functions in the pathway purine metabolism; GMP biosynthesis; GMP from XMP (L-Gln route): step 1/1. Its function is as follows. Catalyzes the synthesis of GMP from XMP. The chain is GMP synthase [glutamine-hydrolyzing] from Pseudomonas fluorescens (strain Pf0-1).